The sequence spans 365 residues: Phospho-N-acetylmuramoyl-pentapeptide-transferase (365 aa).

The next 10 helical transmembrane spans lie at 3-23 (HIIIGGAVSFIIAILFTPILI), 54-74 (GIAIIVAIVGGYFLAHLASVF), 81-101 (PTASGLLVLGLTVGMGFLGFL), 119-139 (GKLLGQAVLAIGFGVLCLLFL), 162-182 (IAIGGGIIGTLIFLLFIYILV), 198-218 (LAAGTTAIVMAAYSIMTFWQF), 239-259 (LSILAACGLGACLGFLWWNAA), 263-283 (IFMGDTGSLALGGLVAGLSVT), 289-309 (LMIVIGALFVAETISVVIQVV), and 342-362 (FWLLTAMFAVAGVSMFYADWL).

Belongs to the glycosyltransferase 4 family. MraY subfamily. The cofactor is Mg(2+).

The protein localises to the cell membrane. It carries out the reaction UDP-N-acetyl-alpha-D-muramoyl-L-alanyl-gamma-D-glutamyl-meso-2,6-diaminopimeloyl-D-alanyl-D-alanine + di-trans,octa-cis-undecaprenyl phosphate = di-trans,octa-cis-undecaprenyl diphospho-N-acetyl-alpha-D-muramoyl-L-alanyl-D-glutamyl-meso-2,6-diaminopimeloyl-D-alanyl-D-alanine + UMP. Its pathway is cell wall biogenesis; peptidoglycan biosynthesis. Its function is as follows. Catalyzes the initial step of the lipid cycle reactions in the biosynthesis of the cell wall peptidoglycan: transfers peptidoglycan precursor phospho-MurNAc-pentapeptide from UDP-MurNAc-pentapeptide onto the lipid carrier undecaprenyl phosphate, yielding undecaprenyl-pyrophosphoryl-MurNAc-pentapeptide, known as lipid I. The polypeptide is Phospho-N-acetylmuramoyl-pentapeptide-transferase (Corynebacterium kroppenstedtii (strain DSM 44385 / JCM 11950 / CIP 105744 / CCUG 35717)).